A 286-amino-acid polypeptide reads, in one-letter code: ATP synthase gamma chain (286 aa).

The protein belongs to the ATPase gamma chain family. As to quaternary structure, F-type ATPases have 2 components, CF(1) - the catalytic core - and CF(0) - the membrane proton channel. CF(1) has five subunits: alpha(3), beta(3), gamma(1), delta(1), epsilon(1). CF(0) has three main subunits: a, b and c.

The protein resides in the cell inner membrane. Functionally, produces ATP from ADP in the presence of a proton gradient across the membrane. The gamma chain is believed to be important in regulating ATPase activity and the flow of protons through the CF(0) complex. The chain is ATP synthase gamma chain from Shewanella sp. (strain MR-4).